The primary structure comprises 211 residues: Large ribosomal subunit protein uL4 (211 aa).

Residues E44–F90 are disordered. The span at G60–K72 shows a compositional bias: basic residues.

The protein belongs to the universal ribosomal protein uL4 family. Part of the 50S ribosomal subunit.

Its function is as follows. One of the primary rRNA binding proteins, this protein initially binds near the 5'-end of the 23S rRNA. It is important during the early stages of 50S assembly. It makes multiple contacts with different domains of the 23S rRNA in the assembled 50S subunit and ribosome. Forms part of the polypeptide exit tunnel. In Ureaplasma urealyticum serovar 10 (strain ATCC 33699 / Western), this protein is Large ribosomal subunit protein uL4.